Consider the following 606-residue polypeptide: Mitogen-activated protein kinase 20 (606 aa).

One can recognise a Protein kinase domain in the interval 25–316; it reads FKVQEVIGKG…AEEALADPYF (292 aa). Residues 31–39 and lysine 54 each bind ATP; that span reads IGKGSYGVV. Aspartate 151 (proton acceptor) is an active-site residue. Position 187 is a phosphothreonine (threonine 187). The TXY signature appears at 187 to 189; it reads TDY. Tyrosine 189 bears the Phosphotyrosine mark. At threonine 192 the chain carries Phosphothreonine.

It belongs to the protein kinase superfamily. CMGC Ser/Thr protein kinase family. MAP kinase subfamily. Dually phosphorylated on Thr-187 and Tyr-189, which activates the enzyme.

It carries out the reaction L-seryl-[protein] + ATP = O-phospho-L-seryl-[protein] + ADP + H(+). It catalyses the reaction L-threonyl-[protein] + ATP = O-phospho-L-threonyl-[protein] + ADP + H(+). Activated by threonine and tyrosine phosphorylation. This is Mitogen-activated protein kinase 20 (MPK20) from Arabidopsis thaliana (Mouse-ear cress).